The sequence spans 297 residues: MKRPDYRTLQALDAVIRERGFERAAQKLCITQSAVSQRIKQLENMFGQPLLVRTVPPRPTEQGQKLLALLRQVELLEEEWLGDEQTGSTPLLLSLAVNADSLATWLLPALSAVLADSPIRLNLQVEDETRTQERLRRGEVVGAVSIQPQALPSCLVDQLGALDYLFVGSKAFADRYFPNGVTRAALLKAPAVAFDHLDDMHQAFLQQNFDLPPGSVPCHIVNSSEAFVQLARQGTTCCMIPHLQIEKELKSGELIDLTPGLYQRRMLYWHRFAPESRMMRNVTDALLAYGHKVLRQD.

The region spanning 4–60 (PDYRTLQALDAVIRERGFERAAQKLCITQSAVSQRIKQLENMFGQPLLVRTVPPRPT) is the HTH lysR-type domain. Positions 21–40 (FERAAQKLCITQSAVSQRIK) form a DNA-binding region, H-T-H motif.

This sequence belongs to the LysR transcriptional regulatory family. In terms of assembly, homodimer.

Controls the transcription of genes involved in arginine and lysine metabolism. The protein is HTH-type transcriptional regulator ArgP of Enterobacter sp. (strain 638).